The primary structure comprises 94 residues: Co-chaperonin GroES (94 aa).

Belongs to the GroES chaperonin family. In terms of assembly, heptamer of 7 subunits arranged in a ring. Interacts with the chaperonin GroEL.

It is found in the cytoplasm. In terms of biological role, together with the chaperonin GroEL, plays an essential role in assisting protein folding. The GroEL-GroES system forms a nano-cage that allows encapsulation of the non-native substrate proteins and provides a physical environment optimized to promote and accelerate protein folding. GroES binds to the apical surface of the GroEL ring, thereby capping the opening of the GroEL channel. This chain is Co-chaperonin GroES, found in Ehrlichia canis (strain Jake).